A 433-amino-acid polypeptide reads, in one-letter code: Beta-agarase AgaA (433 aa).

Residues 1–20 form the signal peptide; the sequence is MRKITSILLTCVMGCTATYA. In terms of domain architecture, GH16 spans 21-295; the sequence is ADWDGVPVPA…WVRFYKPVPI (275 aa). The Nucleophile role is filled by Glu147. Glu152 functions as the Proton donor in the catalytic mechanism. Residues 300 to 431 enclose the CBM6 domain; the sequence is TTVELGNFHN…QWNGDEIRFV (132 aa).

The protein belongs to the glycosyl hydrolase 16 family. In terms of assembly, monomer.

It is found in the periplasm. It catalyses the reaction Hydrolysis of (1-&gt;4)-beta-D-galactosidic linkages in agarose, giving the tetramer as the predominant product.. Activity is abolished by Hg(2+), Cu(2+), Pb(2+) and Zn(2+) ions, but is not affected by NaCl up to at least 1.0 M, Mg(2+), K(+) and Ca(2+). Not affected by iodoacetamide, p-chloromercuribenzoate, dithiothreitol, 2-mercaptoethanol, EDTA and sodium dodecyl sulfate. Inhibited by N-bromosuccinimide. Functionally, endo-type beta-agarase, which produces neoagarotetraose (NA4) as the main final product, with a small amount of neoagarohexaose (NA6) and neoagarobiose (NA2). In Microbulbifer thermotolerans, this protein is Beta-agarase AgaA.